We begin with the raw amino-acid sequence, 258 residues long: Adenylate kinase (258 aa).

52–57 contributes to the ATP binding site; it reads GAGKGT. The segment at 72–101 is NMP; it reads ATGDMLRSQVAKKTALGKEAKKIMDQGGLV. AMP is bound by residues Thr-73, Arg-78, 99-101, 128-131, and Gln-135; these read GLV and GFPR. The interval 169–206 is LID; that stretch reads GRLVHPASGRSYHKIFNPPKEEMKDDVTGEPLIQRSDD. ATP-binding positions include Arg-170 and 179-180; that span reads SY. Residues Arg-203 and Arg-214 each coordinate AMP. Residue Gln-242 coordinates ATP.

The protein belongs to the adenylate kinase family. AK2 subfamily. In terms of assembly, monomer.

It localises to the cytoplasm. Its subcellular location is the cytosol. The protein localises to the mitochondrion intermembrane space. It catalyses the reaction AMP + ATP = 2 ADP. Its function is as follows. Catalyzes the reversible transfer of the terminal phosphate group between ATP and AMP. Plays an important role in cellular energy homeostasis and in adenine nucleotide metabolism. Adenylate kinase activity is critical for regulation of the phosphate utilization and the AMP de novo biosynthesis pathways. In Aspergillus niger (strain ATCC MYA-4892 / CBS 513.88 / FGSC A1513), this protein is Adenylate kinase (adk1).